Consider the following 218-residue polypeptide: Guanylate kinase (218 aa).

The 181-residue stretch at 10–190 folds into the Guanylate kinase-like domain; it reads GLLIILSSPS…TEERLKTIIT (181 aa). 17–24 lines the ATP pocket; that stretch reads SPSGAGKS.

Belongs to the guanylate kinase family.

It localises to the cytoplasm. The catalysed reaction is GMP + ATP = GDP + ADP. Essential for recycling GMP and indirectly, cGMP. The protein is Guanylate kinase of Jannaschia sp. (strain CCS1).